Here is a 751-residue protein sequence, read N- to C-terminus: Photosystem I P700 chlorophyll a apoprotein A1 (751 aa).

8 consecutive transmembrane segments (helical) span residues 73 to 96, 159 to 182, 198 to 222, 294 to 312, 349 to 372, 388 to 414, 436 to 458, and 533 to 551; these read IFSA…FHGA, LYST…FHYH, MNHH…HVSL, TAHH…GHMY, WHAQ…HHMY, LSLF…IFMV, AIIS…LYIH, and FLVH…LILL. 2 residues coordinate [4Fe-4S] cluster: cysteine 575 and cysteine 584. The next 2 helical transmembrane spans lie at 591–612 and 665–687; these read HVFL…HFSW and LSAY…MFLF. Chlorophyll a' is bound at residue histidine 676. Chlorophyll a is bound by residues methionine 684 and tyrosine 692. Tryptophan 693 contributes to the phylloquinone binding site. Residues 725 to 745 traverse the membrane as a helical segment; it reads AVGVAHYLLGGIATTWAFFLA.

This sequence belongs to the PsaA/PsaB family. The PsaA/B heterodimer binds the P700 chlorophyll special pair and subsequent electron acceptors. PSI consists of a core antenna complex that captures photons, and an electron transfer chain that converts photonic excitation into a charge separation. The eukaryotic PSI reaction center is composed of at least 11 subunits. Requires P700 is a chlorophyll a/chlorophyll a' dimer, A0 is one or more chlorophyll a, A1 is one or both phylloquinones and FX is a shared 4Fe-4S iron-sulfur center. as cofactor.

It localises to the plastid. The protein resides in the chloroplast thylakoid membrane. It carries out the reaction reduced [plastocyanin] + hnu + oxidized [2Fe-2S]-[ferredoxin] = oxidized [plastocyanin] + reduced [2Fe-2S]-[ferredoxin]. Its function is as follows. PsaA and PsaB bind P700, the primary electron donor of photosystem I (PSI), as well as the electron acceptors A0, A1 and FX. PSI is a plastocyanin/cytochrome c6-ferredoxin oxidoreductase, converting photonic excitation into a charge separation, which transfers an electron from the donor P700 chlorophyll pair to the spectroscopically characterized acceptors A0, A1, FX, FA and FB in turn. Oxidized P700 is reduced on the lumenal side of the thylakoid membrane by plastocyanin or cytochrome c6. The chain is Photosystem I P700 chlorophyll a apoprotein A1 from Nephroselmis olivacea (Green alga).